The following is a 90-amino-acid chain: Barrier-to-autointegration factor-like protein (90 aa).

It belongs to the BAF family. In terms of assembly, homodimer. Heterodimerizes with BANF1. In terms of tissue distribution, expressed strongly in testis and pancreas. Also detected in brain, colon, liver, lung, ovary, placenta, prostate, small intestine, spleen and thymus. Not detected in heart, kidney and skeletal muscle.

It localises to the nucleus. The protein localises to the cytoplasm. In terms of biological role, may play a role in BANF1 regulation and influence tissue-specific roles of BANF1. This Homo sapiens (Human) protein is Barrier-to-autointegration factor-like protein (BANF2).